A 249-amino-acid polypeptide reads, in one-letter code: DNA polymerase sliding clamp 1 (249 aa).

The protein belongs to the PCNA family. In terms of assembly, forms heterodimers with PCNA2, which then recruit PCNA3; does not form homotrimers. The heterodimers interact with RfcS homotetramers. Heterotrimer which circularizes head-to-tail (head is at N-terminus, tail is at C-terminus) to form a toroid; DNA passes through its center. Replication factor C (RFC) is required to load the toroid on the DNA. Heterotrimer interacts, probably via this subunit, with flap endonuclease 1 (fen), Hjc, Dpo4, and XPF.

One of the sliding clamp subunits that acts as a moving platform for DNA processing. Responsible for tethering the catalytic subunit of DNA polymerase to DNA during high-speed replication. Heterotrimer stimulates the Holliday junction resolvase Hjc. DNA polymerase I, DNA ligase and the flap endonuclease may be constitutively associated with the PCNA heterotrimer forming a scanning complex able to couple DNA synthesis and Okazaki fragment maturation. This Saccharolobus solfataricus (strain ATCC 35092 / DSM 1617 / JCM 11322 / P2) (Sulfolobus solfataricus) protein is DNA polymerase sliding clamp 1.